We begin with the raw amino-acid sequence, 861 residues long: Isoleucine--tRNA ligase (861 aa).

Positions 57–67 (PYANGNIHVGH) match the 'HIGH' region motif. Position 549 (Glu549) interacts with L-isoleucyl-5'-AMP. Residues 590-594 (KMSKS) carry the 'KMSKS' region motif. Residue Lys593 coordinates ATP.

It belongs to the class-I aminoacyl-tRNA synthetase family. IleS type 1 subfamily. As to quaternary structure, monomer.

It localises to the cytoplasm. The catalysed reaction is tRNA(Ile) + L-isoleucine + ATP = L-isoleucyl-tRNA(Ile) + AMP + diphosphate. Its function is as follows. Catalyzes the attachment of isoleucine to tRNA(Ile). As IleRS can inadvertently accommodate and process structurally similar amino acids such as valine, to avoid such errors it has two additional distinct tRNA(Ile)-dependent editing activities. One activity is designated as 'pretransfer' editing and involves the hydrolysis of activated Val-AMP. The other activity is designated 'posttransfer' editing and involves deacylation of mischarged Val-tRNA(Ile). This Mycoplasma pneumoniae (strain ATCC 29342 / M129 / Subtype 1) (Mycoplasmoides pneumoniae) protein is Isoleucine--tRNA ligase.